Consider the following 63-residue polypeptide: Large ribosomal subunit protein uL29 (63 aa).

Belongs to the universal ribosomal protein uL29 family.

The polypeptide is Large ribosomal subunit protein uL29 (Listeria innocua serovar 6a (strain ATCC BAA-680 / CLIP 11262)).